The chain runs to 300 residues: 4-hydroxy-tetrahydrodipicolinate synthase (300 aa).

Residue Thr-46 coordinates pyruvate. Catalysis depends on Tyr-135, which acts as the Proton donor/acceptor. Lys-163 acts as the Schiff-base intermediate with substrate in catalysis. A pyruvate-binding site is contributed by Val-205.

Belongs to the DapA family. As to quaternary structure, homotetramer; dimer of dimers.

It is found in the cytoplasm. The enzyme catalyses L-aspartate 4-semialdehyde + pyruvate = (2S,4S)-4-hydroxy-2,3,4,5-tetrahydrodipicolinate + H2O + H(+). Its pathway is amino-acid biosynthesis; L-lysine biosynthesis via DAP pathway; (S)-tetrahydrodipicolinate from L-aspartate: step 3/4. Functionally, catalyzes the condensation of (S)-aspartate-beta-semialdehyde [(S)-ASA] and pyruvate to 4-hydroxy-tetrahydrodipicolinate (HTPA). This is 4-hydroxy-tetrahydrodipicolinate synthase from Koribacter versatilis (strain Ellin345).